The following is a 933-amino-acid chain: Dual 3',5'-cyclic-AMP and -GMP phosphodiesterase 11A (933 aa).

The disordered stretch occupies residues 42–121; it reads HTSGQGASSL…LQRRASQKEL (80 aa). S162, S163, and S239 each carry phosphoserine. 2 GAF domains span residues 217 to 370 and 402 to 558; these read DLTS…GIAI and DLEK…GLGI. S424 serves as a coordination point for 3',5'-cyclic GMP. Positions 588–912 constitute a PDEase domain; the sequence is SKAEVDKFKA…RKWEELHQKR (325 aa). H664 serves as the catalytic Proton donor. 4 residues coordinate a divalent metal cation: H668, H704, D705, and D816. The tract at residues 913 to 933 is disordered; that stretch reads LQVSAASPDPASPMVAGEDRL.

Belongs to the cyclic nucleotide phosphodiesterase family. The cofactor is a divalent metal cation. As to expression, expressed in testis and developing spermatoza.

It is found in the cytoplasm. The protein localises to the cytosol. The catalysed reaction is 3',5'-cyclic GMP + H2O = GMP + H(+). It catalyses the reaction 3',5'-cyclic AMP + H2O = AMP + H(+). Its activity is regulated as follows. Inhibited by 3-isobutyl-1-methylxanthine (IBMX), zaprinast and dipyridamole. cGMP acts as an allosteric activator. Functionally, plays a role in signal transduction by regulating the intracellular concentration of cyclic nucleotides cAMP and cGMP. Catalyzes the hydrolysis of both cAMP and cGMP to 5'-AMP and 5'-GMP, respectively. The protein is Dual 3',5'-cyclic-AMP and -GMP phosphodiesterase 11A (Pde11a) of Mus musculus (Mouse).